Here is a 423-residue protein sequence, read N- to C-terminus: Putative serpin-Z12 (423 aa).

Residues M1–V25 form a disordered region. The segment at G370 to V394 is RCL.

The protein belongs to the serpin family.

In terms of biological role, probable serine protease inhibitor. The chain is Putative serpin-Z12 from Oryza sativa subsp. japonica (Rice).